A 381-amino-acid chain; its full sequence is Cytochrome b (381 aa).

A run of 4 helical transmembrane segments spans residues G32–M52, M76–L98, V113–V133, and F179–A199. H82 and H96 together coordinate heme b. Residues H183 and H197 each coordinate heme b. Residue H202 participates in a ubiquinone binding. The next 4 helical transmembrane spans lie at F225–F245, A289–G309, I318–G338, and T345–P365.

This sequence belongs to the cytochrome b family. As to quaternary structure, the main subunits of complex b-c1 are: cytochrome b, cytochrome c1 and the Rieske protein. Heme b is required as a cofactor.

It is found in the mitochondrion inner membrane. Its function is as follows. Component of the ubiquinol-cytochrome c reductase complex (complex III or cytochrome b-c1 complex) that is part of the mitochondrial respiratory chain. The b-c1 complex mediates electron transfer from ubiquinol to cytochrome c. Contributes to the generation of a proton gradient across the mitochondrial membrane that is then used for ATP synthesis. The chain is Cytochrome b (MT-CYB) from Chlamydomonas reinhardtii (Chlamydomonas smithii).